A 379-amino-acid polypeptide reads, in one-letter code: Chaperone protein DnaJ (379 aa).

The region spanning 5 to 70 (DYYEILGLDK…QKKAQYDQFG (66 aa)) is the J domain. A CR-type zinc finger spans residues 135–217 (GVEKEISVTR…CRGKGIVRKH (83 aa)). Zn(2+) contacts are provided by cysteine 148, cysteine 151, cysteine 165, cysteine 168, cysteine 191, cysteine 194, cysteine 205, and cysteine 208. 4 CXXCXGXG motif repeats span residues 148-155 (CETCNGTG), 165-172 (CDKCNGTG), 191-198 (CDKCGGRG), and 205-212 (CEECRGKG).

Belongs to the DnaJ family. As to quaternary structure, homodimer. Zn(2+) serves as cofactor.

The protein localises to the cytoplasm. Participates actively in the response to hyperosmotic and heat shock by preventing the aggregation of stress-denatured proteins and by disaggregating proteins, also in an autonomous, DnaK-independent fashion. Unfolded proteins bind initially to DnaJ; upon interaction with the DnaJ-bound protein, DnaK hydrolyzes its bound ATP, resulting in the formation of a stable complex. GrpE releases ADP from DnaK; ATP binding to DnaK triggers the release of the substrate protein, thus completing the reaction cycle. Several rounds of ATP-dependent interactions between DnaJ, DnaK and GrpE are required for fully efficient folding. Also involved, together with DnaK and GrpE, in the DNA replication of plasmids through activation of initiation proteins. The polypeptide is Chaperone protein DnaJ (Clostridium kluyveri (strain ATCC 8527 / DSM 555 / NBRC 12016 / NCIMB 10680 / K1)).